A 182-amino-acid chain; its full sequence is UPF0149 protein CGSHiEE_07975 (182 aa).

It belongs to the UPF0149 family.

The chain is UPF0149 protein CGSHiEE_07975 from Haemophilus influenzae (strain PittEE).